The following is a 177-amino-acid chain: Large ribosomal subunit protein eL20 (177 aa).

This sequence belongs to the eukaryotic ribosomal protein eL20 family.

The polypeptide is Large ribosomal subunit protein eL20 (RpL18A) (Drosophila melanogaster (Fruit fly)).